Reading from the N-terminus, the 424-residue chain is MAKNIQAIRGMNDYLPGETAIWQRIEGTLKNVLGSYGYSEIRLPIVEQTPLFKRAIGEVTDVVEKEMYTFEDRNGDSLTLRPEGTAGCVRAGIEHGLLYNQEQRLWYIGPMFRHERPQKGRYRQFHQLGCEVFGLQGPDIDAELIMLTARWWRALGISEHVTLELNSIGSLEARANYRDALVAFLEQHKEKLDEDCKRRMYTNPLRVLDSKNPEVQALLNDAPALGDYLDEESREHFAGLCKLLESAGIAYTVNQRLVRGLDYYNRTVFEWVTNSLGSQGTVCAGGRYDGLVEQLGGRATPAVGFAMGLERLVLLVQAVNPEFKADPVVDIYLVASGADTQSAAMALAERLRDELPGVKLMTNHGGGNFKKQFARADKWGARVAVVLGESEVANGTAVVKDLRSGEQTAVAQDSVAAHLRTLLG.

This sequence belongs to the class-II aminoacyl-tRNA synthetase family. In terms of assembly, homodimer.

Its subcellular location is the cytoplasm. It carries out the reaction tRNA(His) + L-histidine + ATP = L-histidyl-tRNA(His) + AMP + diphosphate + H(+). The protein is Histidine--tRNA ligase of Escherichia coli O139:H28 (strain E24377A / ETEC).